Here is a 197-residue protein sequence, read N- to C-terminus: Recombination protein RecR (197 aa).

The segment at 57-72 (CSRCGYLTDFDPCLIC) adopts a C4-type zinc-finger fold. Residues 80–174 (SLICIGEESS…KVTRLAHGLP (95 aa)) enclose the Toprim domain.

The protein belongs to the RecR family.

Its function is as follows. May play a role in DNA repair. It seems to be involved in an RecBC-independent recombinational process of DNA repair. It may act with RecF and RecO. This is Recombination protein RecR from Syntrophomonas wolfei subsp. wolfei (strain DSM 2245B / Goettingen).